Consider the following 942-residue polypeptide: Glutamyl aminopeptidase (942 aa).

The Cytoplasmic segment spans residues 1–14 (MSTDSKRYCIKTKH). A helical; Signal-anchor for type II membrane protein membrane pass occupies residues 15-35 (VAIICAAVVAVGLIVGLSVGL). The Extracellular portion of the chain corresponds to 36 to 942 (TRSCDSKDGG…RDTIRDWFFN (907 aa)). The interval 40–74 (DSKDGGQGTTQSPSHLPPTSSPPQDQGVCPASEDE) is disordered. Residues Asn110, Asn114, and Asn187 are each glycosylated (N-linked (GlcNAc...) asparagine). Glu213 is a binding site for substrate. Asn314 is a glycosylation site (N-linked (GlcNAc...) asparagine). Residue 347 to 351 (GAMEN) coordinates substrate. Asn367 carries an N-linked (GlcNAc...) asparagine glycan. Residue His383 participates in Zn(2+) binding. Glu384 serves as the catalytic Proton acceptor. The Zn(2+) site is built by His387 and Glu406. 9 N-linked (GlcNAc...) asparagine glycosylation sites follow: Asn557, Asn579, Asn587, Asn597, Asn632, Asn668, Asn753, Asn786, and Asn791. Position 877 (Arg877) interacts with substrate.

This sequence belongs to the peptidase M1 family. As to quaternary structure, homodimer; disulfide-linked. Zn(2+) serves as cofactor.

The protein localises to the cell membrane. The catalysed reaction is Release of N-terminal glutamate (and to a lesser extent aspartate) from a peptide.. Its activity is regulated as follows. Substrate specificity is modulated by calcium which enhances the enzymatic activity for cleavage of acidic residues while reducing its activity with basic residues. Inhibited by aminopeptidase inhibitors amastatin and bestatin. Its function is as follows. Regulates central hypertension through its calcium-modulated preference to cleave N-terminal acidic residues from peptides such as angiotensin II. This Sus scrofa (Pig) protein is Glutamyl aminopeptidase (ENPEP).